Consider the following 273-residue polypeptide: Transposable element Tcb1 transposase (273 aa).

It belongs to the transposase 5 family.

The protein resides in the nucleus. Its function is as follows. Probably essential for transposable element Tcb1 transposition. The insertion of Tcb1 is the main cause of spontaneous mutations. The polypeptide is Transposable element Tcb1 transposase (Caenorhabditis briggsae).